Reading from the N-terminus, the 310-residue chain is Acetylglutamate kinase (310 aa).

Residues 79-80 (GG), Arg-101, and Asn-206 each bind substrate.

This sequence belongs to the acetylglutamate kinase family. ArgB subfamily.

The protein localises to the cytoplasm. The enzyme catalyses N-acetyl-L-glutamate + ATP = N-acetyl-L-glutamyl 5-phosphate + ADP. It functions in the pathway amino-acid biosynthesis; L-arginine biosynthesis; N(2)-acetyl-L-ornithine from L-glutamate: step 2/4. Functionally, catalyzes the ATP-dependent phosphorylation of N-acetyl-L-glutamate. The chain is Acetylglutamate kinase from Rhodospirillum rubrum (strain ATCC 11170 / ATH 1.1.1 / DSM 467 / LMG 4362 / NCIMB 8255 / S1).